A 491-amino-acid chain; its full sequence is Protein nucleotidyltransferase YdiU (491 aa).

Residues Gly94, Gly96, Arg97, Lys117, Asp129, Gly130, Arg180, and Arg187 each coordinate ATP. The active-site Proton acceptor is the Asp256. Mg(2+) is bound by residues Asn257 and Asp266. Asp266 provides a ligand contact to ATP.

The protein belongs to the SELO family. The cofactor is Mg(2+). It depends on Mn(2+) as a cofactor.

The catalysed reaction is L-seryl-[protein] + ATP = 3-O-(5'-adenylyl)-L-seryl-[protein] + diphosphate. It catalyses the reaction L-threonyl-[protein] + ATP = 3-O-(5'-adenylyl)-L-threonyl-[protein] + diphosphate. The enzyme catalyses L-tyrosyl-[protein] + ATP = O-(5'-adenylyl)-L-tyrosyl-[protein] + diphosphate. It carries out the reaction L-histidyl-[protein] + UTP = N(tele)-(5'-uridylyl)-L-histidyl-[protein] + diphosphate. The catalysed reaction is L-seryl-[protein] + UTP = O-(5'-uridylyl)-L-seryl-[protein] + diphosphate. It catalyses the reaction L-tyrosyl-[protein] + UTP = O-(5'-uridylyl)-L-tyrosyl-[protein] + diphosphate. Its function is as follows. Nucleotidyltransferase involved in the post-translational modification of proteins. It can catalyze the addition of adenosine monophosphate (AMP) or uridine monophosphate (UMP) to a protein, resulting in modifications known as AMPylation and UMPylation. The protein is Protein nucleotidyltransferase YdiU of Clostridium botulinum (strain 657 / Type Ba4).